The sequence spans 365 residues: Ribosomal RNA large subunit methyltransferase F (365 aa).

Residues 1–49 are disordered; it reads MSKPAVKSVQSATAKTATRAVNIRQKVKAPKQAKPEAKGRVRPSKDKPR. The span at 33-49 shows a compositional bias: basic and acidic residues; it reads AKPEAKGRVRPSKDKPR.

This sequence belongs to the methyltransferase superfamily. METTL16/RlmF family.

The protein resides in the cytoplasm. The enzyme catalyses adenosine(1618) in 23S rRNA + S-adenosyl-L-methionine = N(6)-methyladenosine(1618) in 23S rRNA + S-adenosyl-L-homocysteine + H(+). In terms of biological role, specifically methylates the adenine in position 1618 of 23S rRNA. The sequence is that of Ribosomal RNA large subunit methyltransferase F from Shewanella baltica (strain OS185).